The following is a 358-amino-acid chain: MATH domain and coiled-coil domain-containing protein At3g58440 (358 aa).

In terms of domain architecture, MATH spans 8–131; the sequence is QDKFTWVLEK…NDRLTIVAEV (124 aa). The stretch at 250-309 forms a coiled coil; that stretch reads LRDAGFKVDWLEKKLDQLKEKKEEEMSGLARLHEIEERLQKLKLLFVDLESQLQKEKVEA.

The sequence is that of MATH domain and coiled-coil domain-containing protein At3g58440 from Arabidopsis thaliana (Mouse-ear cress).